The following is a 469-amino-acid chain: Neuraminidase (469 aa).

Over 1 to 9 (MNPNQKIIT) the chain is Intravirion. A helical transmembrane segment spans residues 10 to 30 (IGSVSLTIATICFLMQIAILV). Positions 11–33 (GSVSLTIATICFLMQIAILVTTV) are involved in apical transport and lipid raft association. Topologically, residues 31–469 (TTVTLHFKQY…DGADINLMPI (439 aa)) are virion surface. Residues 36 to 88 (HFKQYECDSPANNQVMPCEPIIIERNITEIVYLTNTTIEKEICPKLVEYRNWS) are hypervariable stalk region. Residues Asn61, Asn70, and Asn86 are each glycosylated (N-linked (GlcNAc...) asparagine; by host). The segment at 91-469 (QCKITGFAPF…DGADINLMPI (379 aa)) is head of neuraminidase. Intrachain disulfides connect Cys92-Cys417, Cys124-Cys129, Cys183-Cys230, Cys232-Cys237, Cys278-Cys291, Cys280-Cys289, Cys318-Cys337, and Cys421-Cys447. Arg118 serves as a coordination point for substrate. Asn146 carries an N-linked (GlcNAc...) asparagine; by host glycan. Asp151 acts as the Proton donor/acceptor in catalysis. Arg152 contacts substrate. N-linked (GlcNAc...) asparagine; by host glycans are attached at residues Asn200 and Asn234. 276-277 (EE) contributes to the substrate binding site. Position 292 (Arg292) interacts with substrate. Ca(2+) contacts are provided by Asp293, Gly297, and Asp324. Arg371 contributes to the substrate binding site. The N-linked (GlcNAc...) asparagine; by host glycan is linked to Asn402. Residue Tyr406 is the Nucleophile of the active site.

It belongs to the glycosyl hydrolase 34 family. Homotetramer. Requires Ca(2+) as cofactor. N-glycosylated.

It is found in the virion membrane. The protein localises to the host apical cell membrane. It carries out the reaction Hydrolysis of alpha-(2-&gt;3)-, alpha-(2-&gt;6)-, alpha-(2-&gt;8)- glycosidic linkages of terminal sialic acid residues in oligosaccharides, glycoproteins, glycolipids, colominic acid and synthetic substrates.. Its activity is regulated as follows. Inhibited by the neuraminidase inhibitors zanamivir (Relenza) and oseltamivir (Tamiflu). These drugs interfere with the release of progeny virus from infected cells and are effective against all influenza strains. Resistance to neuraminidase inhibitors is quite rare. Functionally, catalyzes the removal of terminal sialic acid residues from viral and cellular glycoconjugates. Cleaves off the terminal sialic acids on the glycosylated HA during virus budding to facilitate virus release. Additionally helps virus spread through the circulation by further removing sialic acids from the cell surface. These cleavages prevent self-aggregation and ensure the efficient spread of the progeny virus from cell to cell. Otherwise, infection would be limited to one round of replication. Described as a receptor-destroying enzyme because it cleaves a terminal sialic acid from the cellular receptors. May facilitate viral invasion of the upper airways by cleaving the sialic acid moieties on the mucin of the airway epithelial cells. Likely to plays a role in the budding process through its association with lipid rafts during intracellular transport. May additionally display a raft-association independent effect on budding. Plays a role in the determination of host range restriction on replication and virulence. Sialidase activity in late endosome/lysosome traffic seems to enhance virus replication. This is Neuraminidase from Aves (whales).